The chain runs to 340 residues: Holliday junction branch migration complex subunit RuvB (340 aa).

The interval 1–181 is large ATPase domain (RuvB-L); that stretch reads MDRIVEIEKA…FGMQFRLNFY (181 aa). ATP-binding positions include Leu-20, Arg-21, Gly-62, Lys-65, Thr-66, Thr-67, 128–130, Arg-171, Tyr-181, and Arg-218; that span reads EDF. Thr-66 lines the Mg(2+) pocket. Residues 182 to 252 form a small ATPAse domain (RuvB-S) region; the sequence is TSDELAKIVQ…RAKSSLDALG (71 aa). Positions 255 to 340 are head domain (RuvB-H); it reads DLGFDEMDLK…TQKGLFDEDQ (86 aa). DNA contacts are provided by Arg-309 and Arg-314.

The protein belongs to the RuvB family. In terms of assembly, homohexamer. Forms an RuvA(8)-RuvB(12)-Holliday junction (HJ) complex. HJ DNA is sandwiched between 2 RuvA tetramers; dsDNA enters through RuvA and exits via RuvB. An RuvB hexamer assembles on each DNA strand where it exits the tetramer. Each RuvB hexamer is contacted by two RuvA subunits (via domain III) on 2 adjacent RuvB subunits; this complex drives branch migration. In the full resolvosome a probable DNA-RuvA(4)-RuvB(12)-RuvC(2) complex forms which resolves the HJ.

Its subcellular location is the cytoplasm. It catalyses the reaction ATP + H2O = ADP + phosphate + H(+). Functionally, the RuvA-RuvB-RuvC complex processes Holliday junction (HJ) DNA during genetic recombination and DNA repair, while the RuvA-RuvB complex plays an important role in the rescue of blocked DNA replication forks via replication fork reversal (RFR). RuvA specifically binds to HJ cruciform DNA, conferring on it an open structure. The RuvB hexamer acts as an ATP-dependent pump, pulling dsDNA into and through the RuvAB complex. RuvB forms 2 homohexamers on either side of HJ DNA bound by 1 or 2 RuvA tetramers; 4 subunits per hexamer contact DNA at a time. Coordinated motions by a converter formed by DNA-disengaged RuvB subunits stimulates ATP hydrolysis and nucleotide exchange. Immobilization of the converter enables RuvB to convert the ATP-contained energy into a lever motion, pulling 2 nucleotides of DNA out of the RuvA tetramer per ATP hydrolyzed, thus driving DNA branch migration. The RuvB motors rotate together with the DNA substrate, which together with the progressing nucleotide cycle form the mechanistic basis for DNA recombination by continuous HJ branch migration. Branch migration allows RuvC to scan DNA until it finds its consensus sequence, where it cleaves and resolves cruciform DNA. The sequence is that of Holliday junction branch migration complex subunit RuvB from Campylobacter hominis (strain ATCC BAA-381 / DSM 21671 / CCUG 45161 / LMG 19568 / NCTC 13146 / CH001A).